Here is a 156-residue protein sequence, read N- to C-terminus: 6,7-dimethyl-8-ribityllumazine synthase (156 aa).

5-amino-6-(D-ribitylamino)uracil contacts are provided by residues F23, 57-59 (AFE), and 81-83 (AII). 86–87 (ST) contacts (2S)-2-hydroxy-3-oxobutyl phosphate. Catalysis depends on H89, which acts as the Proton donor. F114 serves as a coordination point for 5-amino-6-(D-ribitylamino)uracil. R128 contacts (2S)-2-hydroxy-3-oxobutyl phosphate.

This sequence belongs to the DMRL synthase family.

The catalysed reaction is (2S)-2-hydroxy-3-oxobutyl phosphate + 5-amino-6-(D-ribitylamino)uracil = 6,7-dimethyl-8-(1-D-ribityl)lumazine + phosphate + 2 H2O + H(+). It functions in the pathway cofactor biosynthesis; riboflavin biosynthesis; riboflavin from 2-hydroxy-3-oxobutyl phosphate and 5-amino-6-(D-ribitylamino)uracil: step 1/2. In terms of biological role, catalyzes the formation of 6,7-dimethyl-8-ribityllumazine by condensation of 5-amino-6-(D-ribitylamino)uracil with 3,4-dihydroxy-2-butanone 4-phosphate. This is the penultimate step in the biosynthesis of riboflavin. The protein is 6,7-dimethyl-8-ribityllumazine synthase of Wolinella succinogenes (strain ATCC 29543 / DSM 1740 / CCUG 13145 / JCM 31913 / LMG 7466 / NCTC 11488 / FDC 602W) (Vibrio succinogenes).